The primary structure comprises 353 residues: Photosystem II D2 protein (353 aa).

At Thr2 the chain carries N-acetylthreonine. Phosphothreonine is present on Thr2. The chain crosses the membrane as a helical span at residues 41-61; sequence CAYFALGGWFTGTTFVTSWYT. His118 is a binding site for chlorophyll a. The helical transmembrane segment at 125-141 threads the bilayer; sequence GFMLRQFELARSVQLRP. Residues Gln130 and Asn143 each contribute to the pheophytin a site. The chain crosses the membrane as a helical span at residues 153-166; sequence VFVSVFLIYPLGQS. His198 provides a ligand contact to chlorophyll a. Residues 208-228 form a helical membrane-spanning segment; it reads AALLCAIHGATVENTLFEDGD. Residues His215 and Phe262 each coordinate a plastoquinone. His215 is a Fe cation binding site. Residue His269 participates in Fe cation binding. A helical transmembrane segment spans residues 279 to 295; it reads GLWMSALGVVGLALNLR.

It belongs to the reaction center PufL/M/PsbA/D family. PSII is composed of 1 copy each of membrane proteins PsbA, PsbB, PsbC, PsbD, PsbE, PsbF, PsbH, PsbI, PsbJ, PsbK, PsbL, PsbM, PsbT, PsbX, PsbY, PsbZ, Psb30/Ycf12, at least 3 peripheral proteins of the oxygen-evolving complex and a large number of cofactors. It forms dimeric complexes. Requires The D1/D2 heterodimer binds P680, chlorophylls that are the primary electron donor of PSII, and subsequent electron acceptors. It shares a non-heme iron and each subunit binds pheophytin, quinone, additional chlorophylls, carotenoids and lipids. There is also a Cl(-1) ion associated with D1 and D2, which is required for oxygen evolution. The PSII complex binds additional chlorophylls, carotenoids and specific lipids. as cofactor.

Its subcellular location is the plastid. It localises to the chloroplast thylakoid membrane. It catalyses the reaction 2 a plastoquinone + 4 hnu + 2 H2O = 2 a plastoquinol + O2. Its function is as follows. Photosystem II (PSII) is a light-driven water:plastoquinone oxidoreductase that uses light energy to abstract electrons from H(2)O, generating O(2) and a proton gradient subsequently used for ATP formation. It consists of a core antenna complex that captures photons, and an electron transfer chain that converts photonic excitation into a charge separation. The D1/D2 (PsbA/PsbD) reaction center heterodimer binds P680, the primary electron donor of PSII as well as several subsequent electron acceptors. D2 is needed for assembly of a stable PSII complex. The sequence is that of Photosystem II D2 protein from Morus indica (Mulberry).